The following is a 512-amino-acid chain: Plastidal glycolate/glycerate translocator 1, chloroplastic (512 aa).

A chloroplast-targeting transit peptide spans 1-76; the sequence is MATLLATPIF…MNFERKLSVQ (76 aa). N-acetylalanine is present on Ala77. 12 helical membrane-spanning segments follow: residues 93-113, 127-147, 160-180, 195-215, 238-258, 270-290, 293-313, 336-356, 367-387, 398-418, 425-445, and 480-500; these read VIAI…DYFL, ALFG…VVPA, FLFI…VLPL, YIVA…AIAV, LELW…LFYP, PFLL…PSSI, VFHP…AFGY, AGDI…FSMF, AEIF…TALV, TVSI…VSLF, LTAA…QVVL, and LPFC…LCSV.

This sequence belongs to the CidB/LrgB family. As to expression, expressed in leaves, stems and flowers, but not in roots.

It is found in the plastid. The protein resides in the chloroplast membrane. Its function is as follows. Glycolate/glycerate transporter required for photorespiration. The chain is Plastidal glycolate/glycerate translocator 1, chloroplastic (PLGG1) from Arabidopsis thaliana (Mouse-ear cress).